A 273-amino-acid polypeptide reads, in one-letter code: Putative ankyrin repeat protein RBE_0317 (273 aa).

ANK repeat units lie at residues 31–60 (LGKE…DFYS), 93–123 (NGNT…EVNT), 127–157 (GGNS…NVNE), 161–191 (YGDT…DVNE), and 195–225 (QGET…DTKQ).

The protein is Putative ankyrin repeat protein RBE_0317 of Rickettsia bellii (strain RML369-C).